Consider the following 749-residue polypeptide: Protein SWAP (749 aa).

The segment at 8-124 (SNVHVQEYKD…RNDQRNAIGF (117 aa)) is dry CEEERYL. The span at 105 to 118 (EQEKEEEEKRRNDQ) shows a compositional bias: basic and acidic residues. Residues 105 to 149 (EQEKEEEEKRRNDQRNAIGFDYGTGKVKARESDSEDEPFEPPEGI) are disordered. One copy of the SURP motif 1 repeat lies at 166–209 (IIEKTASFIVANGTQMEIVIKAKQRNNAEQFGFLEFDHRLNPFY). Positions 256 to 310 (HGSDSEDSDSDYELHPSLLSGGAKRPVTPEKPGAIGPRKKPVEPEKPPDFTLKPV) are disordered. The stretch at 391 to 431 (ILNSYAEHVAQRGLEAEASLAAREDLQLHFMEPKSPYYSYY) is one SURP motif 2 repeat. Residues 458–478 (PAPPSAVSSPGPSSLMSLNLS) are compositionally biased toward low complexity. 3 disordered regions span residues 458-498 (PAPP…SSRL), 537-592 (LRND…QVDR), and 608-749 (KAKK…DRRR). The span at 538–552 (RNDEPRDESSFRFDP) shows a compositional bias: basic and acidic residues. Over residues 560–569 (PSDTTANFSD) the composition is skewed to polar residues. A compositionally biased stretch (pro residues) spans 574–583 (FPPPTPPVIP). 2 stretches are compositionally biased toward basic and acidic residues: residues 608 to 659 (KAKK…RSLD) and 679 to 689 (EEMKRTDEDRE). Basic residues-rich tracts occupy residues 690–704 (RKRH…RRSR) and 714–749 (EHKK…DRRR).

Functionally, it is a regulator of pre-mRNA splicing (and, possibly, of other RNA processing events). It may regulate its own expression at the level of RNA processing. In Caenorhabditis elegans, this protein is Protein SWAP (swp-1).